Here is a 66-residue protein sequence, read N- to C-terminus: COP-associated protein (66 aa).

Residues 1–66 (MKATFQVPSI…ALLDAGQEVV (66 aa)) enclose the HMA domain. The Cu cation site is built by Cys12 and Cys15. A disulfide bridge links Cys12 with Cys15.

In terms of biological role, part of a cation-transporting system which is associated with copper export out of the H.pylori cells. The chain is COP-associated protein (copP) from Helicobacter pylori (strain ATCC 700392 / 26695) (Campylobacter pylori).